Reading from the N-terminus, the 242-residue chain is Small ribosomal subunit protein uS2 (242 aa).

Belongs to the universal ribosomal protein uS2 family.

The chain is Small ribosomal subunit protein uS2 from Neisseria meningitidis serogroup C (strain 053442).